The chain runs to 179 residues: Transthyretin-like protein 46 (179 aa).

Positions 1-17 (MNKLFVLLIALLGLTAA) are cleaved as a signal peptide. Residues 144–179 (RRGGFNADYMDPDNSEKDQSKSSEESEDKEKTVETF) are disordered. The span at 157–179 (NSEKDQSKSSEESEDKEKTVETF) shows a compositional bias: basic and acidic residues.

Belongs to the nematode transthyretin-like family.

It is found in the secreted. The sequence is that of Transthyretin-like protein 46 (ttr-46) from Caenorhabditis elegans.